Reading from the N-terminus, the 2771-residue chain is Kinesin-like protein KIN-12D (2771 aa).

Basic and acidic residues-rich tracts occupy residues 1-13 (MSKETKLSRRDSD) and 40-54 (KNPKHECGSKIDRTP). 2 disordered regions span residues 1-73 (MSKE…TPDK) and 117-139 (YSETNSTQNTPTKSVSKPPGSCY). The segment covering 118-131 (SETNSTQNTPTKSV) has biased composition (polar residues). Residues 193–530 (NVQILIRVRP…LKFAQRAKLI (338 aa)) enclose the Kinesin motor domain. An ATP-binding site is contributed by 274–281 (GQTGSGKT). 3 microtubules-binding regions span residues 400-404 (SSRSH), 431-437 (VDLAGSE), and 479-483 (HIPYR). Coiled coils occupy residues 1033 to 1110 (AATA…NEME), 1267 to 1331 (ELKQ…MKEK), 1410 to 1505 (IILL…YVEN), 2108 to 2390 (ELED…EQVK), and 2512 to 2677 (RERD…LAQE). Over residues 2727 to 2736 (LKGKAKSRRS) the composition is skewed to basic residues. The tract at residues 2727-2771 (LKGKAKSRRSRNPERKMPSMPSPRRSWSQSPRSMSQVPFFSSLDR) is disordered. Residues 2744 to 2762 (PSMPSPRRSWSQSPRSMSQ) show a composition bias toward low complexity.

Belongs to the TRAFAC class myosin-kinesin ATPase superfamily. Kinesin family. KIN-12 subfamily. Expressed in tissues enriched in dividing cells, such as root meristems, root primordia, and leaf primordia/young leaves.

It localises to the cytoplasm. Its subcellular location is the cytoskeleton. It is found in the phragmoplast. Its function is as follows. Involved in the spatial control of cytokinesis by a proper phragmoplast guidance. This is Kinesin-like protein KIN-12D from Arabidopsis thaliana (Mouse-ear cress).